Consider the following 788-residue polypeptide: Bifunctional purine biosynthetic protein ADE1 (788 aa).

A GARS region spans residues 1–430 (MEPIIALLIG…DIAHHALNPK (430 aa)). The ATP-grasp domain occupies 115-321 (KDFMHRNNIP…LAEIILACVN (207 aa)). 141–202 (LDTCTFDVVI…EELLEGEELS (62 aa)) contacts ATP. Residues glutamate 291 and asparagine 293 each coordinate Mg(2+). The AIRS stretch occupies residues 437–769 (LTYENSGVSV…TVYRIGQLVD (333 aa)).

This sequence in the N-terminal section; belongs to the GARS family. It in the C-terminal section; belongs to the AIR synthase family. Requires Mg(2+) as cofactor. Mn(2+) is required as a cofactor.

It localises to the cytoplasm. It is found in the cytosol. It carries out the reaction 5-phospho-beta-D-ribosylamine + glycine + ATP = N(1)-(5-phospho-beta-D-ribosyl)glycinamide + ADP + phosphate + H(+). The enzyme catalyses 2-formamido-N(1)-(5-O-phospho-beta-D-ribosyl)acetamidine + ATP = 5-amino-1-(5-phospho-beta-D-ribosyl)imidazole + ADP + phosphate + H(+). Its pathway is purine metabolism; IMP biosynthesis via de novo pathway; 5-amino-1-(5-phospho-D-ribosyl)imidazole from N(2)-formyl-N(1)-(5-phospho-D-ribosyl)glycinamide: step 2/2. It participates in purine metabolism; IMP biosynthesis via de novo pathway; N(1)-(5-phospho-D-ribosyl)glycinamide from 5-phospho-alpha-D-ribose 1-diphosphate: step 2/2. Catalyzes the second and fifth step in the 'de novo' purine biosynthesis pathway; contains phosphoribosylamine--glycine ligase (GARS) and phosphoribosylformylglycinamidine cyclo-ligase (AIRS) activities. This chain is Bifunctional purine biosynthetic protein ADE1, found in Schizosaccharomyces pombe (strain 972 / ATCC 24843) (Fission yeast).